A 462-amino-acid polypeptide reads, in one-letter code: Microspherule protein 1 (462 aa).

Position 1 is an N-acetylmethionine (M1). The interval 1 to 130 (MDKDSQGLLD…KSKQPLQVTK (130 aa)) is disordered. Phosphoserine is present on S22. The span at 43–55 (PKRRSSSRFIKRK) shows a compositional bias: basic residues. Residue S102 is modified to Phosphoserine. T103 carries the post-translational modification Phosphothreonine. Residues 103-112 (TPVPPSPAPA) show a composition bias toward pro residues. Position 108 is a phosphoserine (S108). The Nuclear localization signal signature appears at 113-123 (PGLTKRVKKSK). Residues K123 and K130 each carry the N6-acetyllysine modification. The residue at position 282 (S282) is a Phosphoserine. A coiled-coil region spans residues 301–335 (LEHELMVADRRQKREIRQLEQELHKWQVLVDSITG). One can recognise an FHA domain in the interval 363–419 (ITLGRATKDNQIDVDLSLEGPAWKISRKQGVIKLKNNGDFFIANEGRRPIYIDGRPV). The short motif at 389 to 396 (RKQGVIKL) is the UBR5-degron element.

Component of the chromatin remodeling INO80 complex; specifically part of a complex module associated with the N-terminus of INO80. Component of some MLL1/MLL complex, at least composed of the core components KMT2A/MLL1, ASH2L, HCFC1, WDR5 and RBBP5, as well as the facultative components BACC1, CHD8, E2F6, HSP70, INO80C, KANSL1, LAS1L, MAX, MCRS1, MGA, KAT8/MOF, PELP1, PHF20, PRP31, RING2, RUVB1/TIP49A, RUVB2/TIP49B, SENP3, TAF1, TAF4, TAF6, TAF7, TAF9 and TEX10. Component of the NSL complex at least composed of MOF/KAT8, KANSL1, KANSL2, KANSL3, MCRS1, PHF20, OGT1/OGT, WDR5 and HCFC1. Interacts with NOP2. Interacts with PINX1. Interacts with TERT. Interacts with CCDC85B. Interacts with DAXX. Interacts (via N-terminus) with FMR1 (via phosphorylated form). Interacts with FXR1 and FXR2. Interacts (via C-terminus) with NDE1 (via C-terminus); phosphorylation of NDE1 inhibits the interaction. Interacts (via C-terminus) with ZNF375. Interacts (via C-terminus) with active GTP-bound RHEB (via N-terminus) under conditions of high amino acid concentration; the interaction promotes mTORC1 complex activation by RHEB. Interacts (via N-terminus) with the mTORC1 complex; the interaction ensures mTORC1 activation by RHEB. Interacts with DYNC1I1; the interaction is required for the proper distribution of centriolar satellites. Interacts with TTBK2; the interaction is required for recruitment of TTBK2 to the mother centriole. Interacts with KIF2A; the interaction occurs during mitosis and facilitates chromosome alignment. As to quaternary structure, (Microbial infection) Interacts with Herpes simplex virus ICP22. In terms of processing, ubiquitinated by UBR5 when not assembled in the INO80 complex, leading to its degradation: UBR5 recognizes and binds a degron that is not accessible when MCRS1 is part of the INO80 complex. Post-translationally, phosphorylated by AURKA on Ser-35 and/or Ser-36 during mitosis which is required for kinetochore fiber assembly and mitotic progression but not for spindle localization or for chromosome-induced microtuble aster formation. Also phosphorylated by AURKA on Ser-85 and/or Ser-87. Phosphorylated by TTK/MPS1 which enhances recruitment of KIF2A to the minus end of spindle microtubules and facilitates precise chromosome segregation. Detected in testis, and at lower levels in spleen, thymus, prostate, uterus, small intestine, colon and leukocytes.

The protein localises to the nucleus. Its subcellular location is the nucleolus. It is found in the cytoplasm. It localises to the cytoskeleton. The protein resides in the microtubule organizing center. The protein localises to the centrosome. Its subcellular location is the spindle pole. It is found in the chromosome. It localises to the centromere. The protein resides in the kinetochore. The protein localises to the lysosome. Its subcellular location is the centriolar satellite. Its function is as follows. Modulates the transcription repressor activity of DAXX by recruiting it to the nucleolus. As part of the NSL complex, may be involved in acetylation of nucleosomal histone H4 on several lysine residues. Putative regulatory component of the chromatin remodeling INO80 complex which is involved in transcriptional regulation, DNA replication and probably DNA repair. May also be an inhibitor of TERT telomerase activity. Binds to G-quadruplex structures in mRNA. Binds to RNA homomer poly(G) and poly(U). Maintains RHEB at the lysosome in its active GTP-bound form and prevents its interaction with the mTORC1 complex inhibitor TSC2, ensuring activation of the mTORC1 complex by RHEB. Stabilizes the minus ends of kinetochore fibers by protecting them from depolymerization, ensuring functional spindle assembly during mitosis. Following phosphorylation by TTK/MPS1, enhances recruitment of KIF2A to the minus ends of mitotic spindle microtubules which promotes chromosome alignment. Regulates the morphology of microtubule minus ends in mitotic spindle by maintaining them in a closed conformation characterized by the presence of an electron-dense cap. Regulates G2/M transition and spindle assembly during oocyte meiosis. Mediates histone modifications and transcriptional regulation in germinal vesicle oocytes which are required for meiotic progression. Also regulates microtubule nucleation and spindle assembly by activating aurora kinases during oocyte meiosis. Contributes to the establishment of centriolar satellites and also plays a role in primary cilium formation by recruiting TTBK2 to the mother centriole which is necessary for removal of the CP110 cap from the mother centriole, an early step in ciliogenesis. Required for epiblast development during early embryogenesis. Essential for cell viability. The polypeptide is Microspherule protein 1 (MCRS1) (Homo sapiens (Human)).